We begin with the raw amino-acid sequence, 242 residues long: Biosynthetic peptidoglycan transglycosylase (242 aa).

A helical membrane pass occupies residues 19-39 (ILAALAVFWGGGIALFSVVPV).

This sequence belongs to the glycosyltransferase 51 family.

The protein resides in the cell inner membrane. It catalyses the reaction [GlcNAc-(1-&gt;4)-Mur2Ac(oyl-L-Ala-gamma-D-Glu-L-Lys-D-Ala-D-Ala)](n)-di-trans,octa-cis-undecaprenyl diphosphate + beta-D-GlcNAc-(1-&gt;4)-Mur2Ac(oyl-L-Ala-gamma-D-Glu-L-Lys-D-Ala-D-Ala)-di-trans,octa-cis-undecaprenyl diphosphate = [GlcNAc-(1-&gt;4)-Mur2Ac(oyl-L-Ala-gamma-D-Glu-L-Lys-D-Ala-D-Ala)](n+1)-di-trans,octa-cis-undecaprenyl diphosphate + di-trans,octa-cis-undecaprenyl diphosphate + H(+). The protein operates within cell wall biogenesis; peptidoglycan biosynthesis. Functionally, peptidoglycan polymerase that catalyzes glycan chain elongation from lipid-linked precursors. This Salmonella agona (strain SL483) protein is Biosynthetic peptidoglycan transglycosylase.